Consider the following 341-residue polypeptide: Putative [LysW]-lysine/[LysW]-ornithine hydrolase (341 aa).

His-62 lines the Zn(2+) pocket. The active site involves Asp-64. Position 86 (Asp-86) interacts with Zn(2+). The active-site Proton acceptor is Glu-115. Zn(2+) is bound by residues Glu-116, Glu-140, and His-309.

The protein belongs to the peptidase M20A family. LysK subfamily. It depends on Zn(2+) as a cofactor. The cofactor is Co(2+).

It localises to the cytoplasm. The catalysed reaction is [amino-group carrier protein]-C-terminal-gamma-(L-lysyl)-L-glutamate + H2O = [amino-group carrier protein]-C-terminal-L-glutamate + L-lysine. It catalyses the reaction [amino-group carrier protein]-C-terminal-gamma-(L-ornithyl)-L-glutamate + H2O = [amino-group carrier protein]-C-terminal-L-glutamate + L-ornithine. The protein operates within amino-acid biosynthesis; L-lysine biosynthesis via AAA pathway; L-lysine from L-alpha-aminoadipate (Thermus route): step 5/5. It participates in amino-acid biosynthesis; L-arginine biosynthesis. Catalyzes the release of L-lysine from [LysW]-gamma-L-lysine and the release of L-ornithine from [LysW]-L-ornithine. The protein is Putative [LysW]-lysine/[LysW]-ornithine hydrolase of Pyrobaculum aerophilum (strain ATCC 51768 / DSM 7523 / JCM 9630 / CIP 104966 / NBRC 100827 / IM2).